A 129-amino-acid polypeptide reads, in one-letter code: uncharacterized protein (129 aa).

Residues 1–28 (MAGTLFIILRFVDTTLPSSRVYCVRSLE) lie on the Cytoplasmic side of the membrane. A helical transmembrane segment spans residues 29-49 (VSVAVELAAATVLAFESIGVV). Residues 50 to 54 (DDCGR) lie on the Extracellular side of the membrane. The helical transmembrane segment at 55–75 (SVLFSIILIAAFICSVFLIAS) threads the bilayer. Over 76-129 (EDIAGSRRSTGSCVTLWEGRNISFCLYRSNWLNTVPVGYMFFLRKNRSLDERYF) the chain is Cytoplasmic.

It is found in the membrane. This is an uncharacterized protein from Saccharomyces cerevisiae (strain ATCC 204508 / S288c) (Baker's yeast).